A 295-amino-acid polypeptide reads, in one-letter code: UDP-N-acetylenolpyruvoylglucosamine reductase (295 aa).

Positions 23–188 constitute an FAD-binding PCMH-type domain; the sequence is KVGGPADFLA…ISAKFALKPG (166 aa). Residue Arg-167 is part of the active site. Ser-217 functions as the Proton donor in the catalytic mechanism. Glu-287 is a catalytic residue.

Belongs to the MurB family. FAD is required as a cofactor.

It is found in the cytoplasm. It catalyses the reaction UDP-N-acetyl-alpha-D-muramate + NADP(+) = UDP-N-acetyl-3-O-(1-carboxyvinyl)-alpha-D-glucosamine + NADPH + H(+). The protein operates within cell wall biogenesis; peptidoglycan biosynthesis. Cell wall formation. The chain is UDP-N-acetylenolpyruvoylglucosamine reductase from Streptococcus pyogenes serotype M49 (strain NZ131).